A 531-amino-acid polypeptide reads, in one-letter code: MEALSSLTFKGSLPEAIFEAKGKKKLFVVYISGEDEESDKLNRLTWTDASVADSLSKYCILVHIQAGSVDATNFSAIYPYSSVPCIAAIGFSGTQVWRTEGFITAEDLASSLEKAWLGLHIQETTASIFSAALASQNSETPVSSASSVVLPPGSVPLDAAVASPSTASSVQPSETKSTVTSASTTENNDGTVAVKGKESAEPSNLCDTTKNQPAPSVDGTKANVEHEATETPLRVQAEKEPIRPTAPGTNDNTSRVRSSVDRKRKQGTVINEEDSGVGVSGRDINLTKSVDTKETMKPKDEGGEEEDGEKSKKASDVHLNIRLPDGSSLQEKFSVTSILRMVKDYVNSNQTIGLGAYDLAVPYPRKVYTDQDLDKSLSELRLFDRQALVVVPRKRATVYQRGTSYSESNNNTDPNSGGYFAYVRRVLSYANPFSYFGGGTANASSSVPERQTRPNTEVRNNLGQVGTSFQDPSEGRSNVRNRRPTTSRIGSNIHTLNHNEDEAPFGDGNAFWNGNSTQYGGGSGGDSNDRR.

The residue at position 1 (methionine 1) is an N-acetylmethionine. Residues 160-173 (AVASPSTASSVQPS) are compositionally biased toward low complexity. Disordered regions lie at residues 160–316 (AVAS…KASD) and 441–531 (ANAS…NDRR). 2 stretches are compositionally biased toward polar residues: residues 174-190 (ETKS…NNDG) and 201-214 (EPSN…NQPA). The span at 290–301 (VDTKETMKPKDE) shows a compositional bias: basic and acidic residues. One can recognise a UBX domain in the interval 312 to 390 (KKASDVHLNI…RLFDRQALVV (79 aa)). Composition is skewed to polar residues over residues 441–478 (ANAS…GRSN) and 486–496 (TSRIGSNIHTL).

Interacts with CDC48A.

The sequence is that of Plant UBX domain-containing protein 11 from Arabidopsis thaliana (Mouse-ear cress).